The sequence spans 96 residues: Large ribosomal subunit protein bL28 (96 aa).

The protein belongs to the bacterial ribosomal protein bL28 family.

The sequence is that of Large ribosomal subunit protein bL28 from Methylobacterium sp. (strain 4-46).